The chain runs to 179 residues: Bifunctional protein PyrR (179 aa).

The short motif at 99–111 (VILVDDVLYTGRT) is the PRPP-binding element.

Belongs to the purine/pyrimidine phosphoribosyltransferase family. PyrR subfamily. Homodimer and homohexamer; in equilibrium.

The catalysed reaction is UMP + diphosphate = 5-phospho-alpha-D-ribose 1-diphosphate + uracil. Its function is as follows. Regulates transcriptional attenuation of the pyrimidine nucleotide (pyr) operon by binding in a uridine-dependent manner to specific sites on pyr mRNA. This disrupts an antiterminator hairpin in the RNA and favors formation of a downstream transcription terminator, leading to a reduced expression of downstream genes. In terms of biological role, also displays a weak uracil phosphoribosyltransferase activity which is not physiologically significant. The polypeptide is Bifunctional protein PyrR (Limosilactobacillus fermentum (strain NBRC 3956 / LMG 18251) (Lactobacillus fermentum)).